A 662-amino-acid polypeptide reads, in one-letter code: Polyunsaturated fatty acid lipoxygenase ALOX15 (662 aa).

In terms of domain architecture, PLAT spans 2-114; that stretch reads GLYRIRVSTG…VLSLPEGTGR (113 aa). Positions 115–662 constitute a Lipoxygenase domain; sequence TVGDDPQGLF…PSIVENSVAI (548 aa). Fe cation is bound by residues His-360, His-365, His-540, His-544, and Ile-662.

It belongs to the lipoxygenase family. In terms of assembly, interacts with PEBP1; in response to IL13/interleukin-13, prevents the interaction of PEBP1 with RAF1 to activate the ERK signaling cascade. Fe cation serves as cofactor.

The protein localises to the cytoplasm. The protein resides in the cytosol. It is found in the cell membrane. Its subcellular location is the lipid droplet. It catalyses the reaction (5Z,8Z,11Z,14Z)-eicosatetraenoate + O2 = (12S)-hydroperoxy-(5Z,8Z,10E,14Z)-eicosatetraenoate. It carries out the reaction (9Z,12Z)-octadecadienoate + O2 = (13S)-hydroperoxy-(9Z,11E)-octadecadienoate. The enzyme catalyses (5Z,8Z,11Z,14Z)-eicosatetraenoate + O2 = (15S)-hydroperoxy-(5Z,8Z,11Z,13E)-eicosatetraenoate. The catalysed reaction is (5Z,8Z,11Z,14Z)-eicosatetraenoate + 2 O2 = (14R,15S)-dihydroperoxy-(5Z,8Z,10E,12E)-eicosatetraenoate. It catalyses the reaction (5Z,8Z,11Z,14Z)-eicosatetraenoate + 2 O2 = (8S,15S)-dihydroperoxy-(5Z,9E,11Z,13E)-eicosatetraenoate. It carries out the reaction (14S,15R)-epoxy-(5Z,8Z,11Z)-eicosatrienoate + O2 = (8S)-hydroperoxy-(14S,15R)-epoxy-(5Z,9E,11Z)-eicosatrienoate. The enzyme catalyses (14S,15R)-epoxy-(5Z,8Z,11Z)-eicosatrienoate + O2 = (12S)-hydroperoxy-(14S,15R)-epoxy-(5Z,8Z,10E)-eicosatrienoate. The catalysed reaction is (14R,15S)-epoxy-(5Z,8Z,11Z)-eicosatrienoate + O2 = (5S)-hydroperoxy-(14R,15S)-epoxy-(6E,8Z,11Z)-eicosatrienoate. It catalyses the reaction (14R,15S)-epoxy-(5Z,8Z,11Z)-eicosatrienoate + O2 = (12S)-hydroperoxy-(14R,15S)-epoxy-(5Z,8Z,10E)-eicosatrienoate. It carries out the reaction (15R)-hydroperoxy-(5Z,8Z,11Z,13E)-eicosatetraenoate = 15-oxo-(5Z,8Z,11Z,13E)-eicosatetraenoate + H2O. The enzyme catalyses (15S)-hydroperoxy-(5Z,8Z,11Z,13E)-eicosatetraenoate = (14S,15S)-epoxy-(5Z,8Z,10E,12E)-eicosatetraenoate + H2O. The catalysed reaction is (12S)-hydroperoxy-(5Z,8Z,10E,14Z)-eicosatetraenoate = (8S)-hydroxy-(11S,12S)-epoxy-(5Z,9E,14Z)-eicosatrienoate. It catalyses the reaction (4Z,7Z,10Z,13Z,16Z)-docosapentaenoate + O2 = 14-hydroperoxy-(4Z,7Z,10Z,12E,16Z)-docosapentaenoate. It carries out the reaction (7Z,10Z,13Z,16Z,19Z)-docosapentaenoate + O2 = 14-hydroperoxy-(7Z,10Z,12E,16Z,19Z)-docosapentaenoate. The enzyme catalyses (4Z,7Z,10Z,13Z,16Z,19Z)-docosahexaenoate + O2 = (14S)-hydroperoxy-(4Z,7Z,10Z,12E,16Z,19Z)-docosahexaenoate. The catalysed reaction is (4Z,7Z,10Z,13Z,16Z,19Z)-docosahexaenoate + O2 = (17S)-hydroperoxy-(4Z,7Z,10Z,13Z,15E,19Z)-docosahexaenoate. It catalyses the reaction (7S)-hydroperoxy-(4Z,8E,10Z,13Z,16Z,19Z)-docosahexaenoate + O2 = (7S,14S)-dihydroperoxy-(4Z,8E,10Z,12E,16Z,19Z)-docosahexaenoate. It carries out the reaction (7S)-hydroperoxy-(4Z,8E,10Z,13Z,16Z,19Z)-docosahexaenoate + O2 = (7S,17S)-dihydroperoxy-(4Z,8E,10Z,13Z,15E,19Z)-docosahexaenoate. The enzyme catalyses (4Z,7Z,10Z,13Z,16Z,19Z)-docosahexaenoate + O2 = (11S)-hydroperoxy-(4Z,7Z,9E,13Z,16Z,19Z)-docosahexaenoate. The catalysed reaction is N-(5Z,8Z,11Z,14Z)-eicosatetraenoyl-taurine + O2 = N-(12S)-hydroperoxy-(5Z,8Z,10E,14Z)-eicosatetraenoyl-taurine. It catalyses the reaction N-(5Z,8Z,11Z,14Z)-eicosatetraenoyl-gamma-aminobutanoate + O2 = N-(12S)-hydroperoxy-(5Z,8Z,10E,14Z)-eicosatetraenoyl-gamma-aminobutanoate. It carries out the reaction N-(5Z,8Z,11Z,14Z)-eicosatetraenoyl-glycine + O2 = N-(12S)-hydroperoxy-(5Z,8Z,10E,14Z)-eicosatetraenoyl-glycine. The enzyme catalyses N-(5Z,8Z,11Z,14Z)-eicosatetraenoyl-L-alanine + O2 = N-(12S)-hydroperoxy-(5Z,8Z,10E,14Z)-eicosatetraenoyl-alanine. The catalysed reaction is N-(5Z,8Z,11Z,14Z)-eicosatetraenoyl-taurine + O2 = N-(15S)-hydroperoxy-(5Z,8Z,11Z,13E)-eicosatetraenoyl-taurine. It catalyses the reaction N-(5Z,8Z,11Z,14Z)-eicosatetraenoyl-gamma-aminobutanoate + O2 = N-(15S)-hydroperoxy-(5Z,8Z,11Z,13E)-eicosatetraenoyl-gamma-aminobutanoate. It carries out the reaction N-(5Z,8Z,11Z,14Z)-eicosatetraenoyl-glycine + O2 = N-(15S)-hydroperoxy-(5Z,8Z,11Z,13E)-eicosatetraenoyl-glycine. The enzyme catalyses N-(5Z,8Z,11Z,14Z)-eicosatetraenoyl-L-alanine + O2 = N-(15S)-hydroperoxy-(5Z,8Z,11Z,13E)-eicosatetraenoyl-alanine. It participates in lipid metabolism; hydroperoxy eicosatetraenoic acid biosynthesis. In terms of biological role, non-heme iron-containing dioxygenase that catalyzes the stereo-specific peroxidation of free and esterified polyunsaturated fatty acids generating a spectrum of bioactive lipid mediators. It inserts peroxyl groups at C12 or C15 of arachidonate ((5Z,8Z,11Z,14Z)-eicosatetraenoate) producing both 12-hydroperoxyeicosatetraenoate/12-HPETE and 15-hydroperoxyeicosatetraenoate/15-HPETE. It may then act on 12-HPETE to produce hepoxilins, which may show pro-inflammatory properties. Can also peroxidize linoleate ((9Z,12Z)-octadecadienoate) to 13-hydroperoxyoctadecadienoate. May participate in the sequential oxidations of DHA ((4Z,7Z,10Z,13Z,16Z,19Z)-docosahexaenoate) to generate specialized pro-resolving mediators (SPMs)like resolvin D5 ((7S,17S)-diHPDHA) and (7S,14S)-diHPDHA, that actively down-regulate the immune response and have anti-aggregation properties with platelets. Can convert epoxy fatty acids to hydroperoxy-epoxides derivatives followed by an intramolecular nucleophilic substitution leading to the formation of monocyclic endoperoxides. Plays an important role during the maintenance of self-tolerance by peroxidizing membrane-bound phosphatidylethanolamine which can then signal the sorting process for clearance of apoptotic cells during inflammation and prevent an autoimmune response. In addition to its role in the immune and inflammatory responses, this enzyme may play a role in epithelial wound healing in the cornea through production of lipoxin A4 (LXA(4)) and docosahexaenoic acid-derived neuroprotectin D1 (NPD1; 10R,17S-HDHA), both lipid autacoids exhibit anti-inflammatory and neuroprotective properties. Furthermore, it may regulate actin polymerization which is crucial for several biological processes such as the phagocytosis of apoptotic cells. It is also implicated in the generation of endogenous ligands for peroxisome proliferator activated receptor (PPAR-gamma), hence modulating macrophage development and function. It may also exert a negative effect on skeletal development by regulating bone mass through this pathway. As well as participates in ER stress and downstream inflammation in adipocytes, pancreatic islets, and liver. Finally, it is also involved in the cellular response to IL13/interleukin-13. The polypeptide is Polyunsaturated fatty acid lipoxygenase ALOX15 (Pongo abelii (Sumatran orangutan)).